Here is a 189-residue protein sequence, read N- to C-terminus: Glycerol-3-phosphate acyltransferase (189 aa).

The next 5 membrane-spanning stretches (helical) occupy residues 1 to 21, 51 to 71, 77 to 97, 111 to 131, and 151 to 171; these read MFWL…AILL, LAIL…LIAS, LQDQ…PLYF, MLLG…LLTF, and LLAW…LLIV.

It belongs to the PlsY family. Probably interacts with PlsX.

It is found in the cell inner membrane. It catalyses the reaction an acyl phosphate + sn-glycerol 3-phosphate = a 1-acyl-sn-glycero-3-phosphate + phosphate. Its pathway is lipid metabolism; phospholipid metabolism. Its function is as follows. Catalyzes the transfer of an acyl group from acyl-phosphate (acyl-PO(4)) to glycerol-3-phosphate (G3P) to form lysophosphatidic acid (LPA). This enzyme utilizes acyl-phosphate as fatty acyl donor, but not acyl-CoA or acyl-ACP. This is Glycerol-3-phosphate acyltransferase from Pseudomonas fluorescens (strain Pf0-1).